The following is a 623-amino-acid chain: V-type proton ATPase catalytic subunit A (623 aa).

Position 252-259 (252-259 (GAFGCGKT)) interacts with ATP.

The protein belongs to the ATPase alpha/beta chains family. V-ATPase is a heteromultimeric enzyme composed of a peripheral catalytic V1 complex (main components: subunits A, B, C, D, E, and F) attached to an integral membrane V0 proton pore complex (main component: the proteolipid protein).

It carries out the reaction ATP + H2O + 4 H(+)(in) = ADP + phosphate + 5 H(+)(out). In terms of biological role, catalytic subunit of the peripheral V1 complex of vacuolar ATPase. V-ATPase vacuolar ATPase is responsible for acidifying a variety of intracellular compartments in eukaryotic cells. The protein is V-type proton ATPase catalytic subunit A (CVA69.24) of Gossypium hirsutum (Upland cotton).